Here is a 361-residue protein sequence, read N- to C-terminus: MASVTLRNVRKTYPGGFEAIKGIDFAVGDGQFCVLVGPSGCGKSTLLRMVAGLETITAGEIDIGGRVVNTIEPADRDIAMVFQNYALYPHMSVYNNMAYGLRNRGMKKPDIDARVREAARILEIEPLLQRKPKQLSGGQRQRVAMGRAIVRQPKVFLFDEPLSNLDAKLRIAMRVEIRKLQRRLATTAIYVTHDQLEAMTLADQLVVMNGGVVEQIGSPLEVYRKPATTFVASFIGAPPMNLMQLDGDALRGQLAGGAGAGVLGIRPEDLTLLTDGSAPEGGVAIELRIEAVERVGPESFVYGSRSNGGAAVSPHPGERPAGEIIVRVPGEIAPELGARVTVAAPRQKLHLFDAGGRRRID.

One can recognise an ABC transporter domain in the interval 4–235 (VTLRNVRKTY…PATTFVASFI (232 aa)). Residue 37 to 44 (GPSGCGKS) coordinates ATP.

The protein belongs to the ABC transporter superfamily. sn-glycerol-3-phosphate importer (TC 3.A.1.1.3) family. As to quaternary structure, the complex is composed of two ATP-binding proteins (UgpC), two transmembrane proteins (UgpA and UgpE) and a solute-binding protein (UgpB).

Its subcellular location is the cell inner membrane. The catalysed reaction is sn-glycerol 3-phosphate(out) + ATP + H2O = sn-glycerol 3-phosphate(in) + ADP + phosphate + H(+). Part of the ABC transporter complex UgpBAEC involved in sn-glycerol-3-phosphate (G3P) import. Responsible for energy coupling to the transport system. This is sn-glycerol-3-phosphate import ATP-binding protein UgpC from Rhodopseudomonas palustris (strain BisA53).